A 709-amino-acid polypeptide reads, in one-letter code: Homeobox-leucine zipper protein TF1 (709 aa).

Positions 66-125 (RKRRLQRLTGKQSEVLEGFFSICGHPDDGQKRHLSETTGLGLDQVKFWFQNKRTQVKTMC) form a DNA-binding region, homeobox. A coiled-coil region spans residues 166-187 (NQLAVEMERLMGQSEWLQQEIA). The region spanning 212–441 (GQHDQQMIAE…MARQSARMRD (230 aa)) is the START domain.

The protein belongs to the HD-ZIP homeobox family. Class IV subfamily.

It is found in the nucleus. Its function is as follows. Probable transcription factor. In Oryza sativa subsp. japonica (Rice), this protein is Homeobox-leucine zipper protein TF1 (TF1).